A 333-amino-acid chain; its full sequence is Meiotic drive suppressor wtf9 (333 aa).

A disordered region spans residues 1-69 (MKNNYTSLKS…ENHSSGTTDN (69 aa)). Basic and acidic residues predominate over residues 19 to 30 (KTDHEIDLEKGP). 4 consecutive transmembrane segments (helical) span residues 73-95 (LLIKLLISFTSIILFNAPAVCYL), 108-130 (VEWTLFGFWCFVCTLALIFLTYF), 174-191 (WVVIIWLLWVVICYTLFL), and 204-226 (LICSTCSISAALLLFLLYVRLPF).

This sequence belongs to the WTF family. In terms of assembly, homomer. Interacts with other proteins that exhibit high sequence similarity.

Its subcellular location is the spore membrane. The protein localises to the vacuole membrane. Acts as a suppressor component of the dual wtf meiotic drive system, and can suppress but not confer meiotic drive by compatible poisons. Wtf meiotic drive systems promote unequal transmission of alleles from the parental zygote to progeny spores by encoding a poison and an antidote from the same locus; the poison is trans-acting and forms toxic aggregates in all spores within an ascus, wherease the antidote is spore-specific and targets aggregates for degradation by the vacuole. Meiotic drive by wtf systems therefore lead to poisoning of all progeny that do not inherit the dual poison/antidote allele, or express a compatible antidote. The chain is Meiotic drive suppressor wtf9 from Schizosaccharomyces pombe (strain 972 / ATCC 24843) (Fission yeast).